The following is a 120-amino-acid chain: uncharacterized protein (120 aa).

Positions 1 to 16 (MFKFILLCFCINFAFS) are cleaved as a signal peptide.

This is an uncharacterized protein from Acheta domesticus (House cricket).